A 366-amino-acid chain; its full sequence is MALAVRISTLTVAVTAAALLAGCERPPVDAVQRGYRGTGMQHIVNPRTLAEQIPTQQAPVATPVADNSGPRANQVFQNVKVLGHLSVAEFTRQMAAITEWVAPTEGCNYCHTENLADDSKYQKVVSRRMLEMTQKVNTQWTQHVAATGVTCYTCHRGNPVPKEIWFTAVPQNKRADFIGNLDGQNQAAKVVGLTSLPYDPFTTFLKEETNVRVYGTTALPTGTSKADIKQAEKTYGLMMHFSGALGVNCTYCHNTNGFGSWDNAAPQRATAWYGIRMARDLNNNFMEGLTKTFPAHRLGPTGDVAKINCSTCHQGAYKPLYGAQMAKDYPGLKPAPAAAAASAVEAAPVDAAASAAPVATVATAAK.

Positions 1-22 are cleaved as a signal peptide; the sequence is MALAVRISTLTVAVTAAALLAG. A lipid anchor (N-palmitoyl cysteine) is attached at C23. Residue C23 is the site of S-diacylglycerol cysteine attachment. Heme is bound by residues M94, C107, C110, H111, M129, H143, C151, C154, H155, M238, C249, C252, H253, C309, C312, and H313.

In terms of assembly, component of the photosynthetic reaction center composed of protein subunits L (PufL), M (PufM), H (PuhA) and cytochrome C (PufC). The reaction center interacts with light-harvesting antenna complex LH1. Post-translationally, binds 4 heme groups per subunit.

The protein localises to the cellular chromatophore membrane. Its function is as follows. The reaction center of purple bacteria contains a tightly bound cytochrome molecule which re-reduces the photo oxidized primary electron donor. The sequence is that of Photosynthetic reaction center cytochrome c subunit (pufC) from Rubrivivax gelatinosus (strain NBRC 100245 / IL144).